The following is a 419-amino-acid chain: MSAASSFKSEFLRTLEARGYIHQITHADELDTAAQGGPIVAYIGFDATAPSLHVGSLIQIMLLRRLQQAGHKPIVLMGGGTTKVGDPTGKDESRKLLSDADIQANIAGIKTVFSKFLTFGDGPTDAIMVDNDVWLSKFGYVQFLREYGVHFTVNRMLAFDSVKLRLEREQPMTFLEFNYMLMQAVDFLELNRAHGCVLQMGGSDQWGNILNGVELTRRVDQKSAFGLTTPLLATASGAKMGKTAAGAVWLNAEQLSPYDYWQFWRNTEDADVGRFLKLFTDLPLDRIAELEALEGAQINEAKKVLADEATRMAHGEEEARKARDAAEKAFEQGALSADLPTYEIAAADLDAGVVLAALFADAGLAGSRGEARRLAQGGGLKVNDKAEADANRLITAADLVEGVVKLAAGKKKIVLVKPV.

Tyr42 is a binding site for L-tyrosine. A 'HIGH' region motif is present at residues 47 to 56 (ATAPSLHVGS). 2 residues coordinate L-tyrosine: Tyr179 and Gln183. The 'KMSKS' region motif lies at 239–243 (KMGKT). Lys242 is an ATP binding site. The region spanning 353–418 (VVLAALFADA…GKKKIVLVKP (66 aa)) is the S4 RNA-binding domain.

This sequence belongs to the class-I aminoacyl-tRNA synthetase family. TyrS type 1 subfamily. In terms of assembly, homodimer.

The protein localises to the cytoplasm. The enzyme catalyses tRNA(Tyr) + L-tyrosine + ATP = L-tyrosyl-tRNA(Tyr) + AMP + diphosphate + H(+). Its function is as follows. Catalyzes the attachment of tyrosine to tRNA(Tyr) in a two-step reaction: tyrosine is first activated by ATP to form Tyr-AMP and then transferred to the acceptor end of tRNA(Tyr). In Caulobacter vibrioides (strain ATCC 19089 / CIP 103742 / CB 15) (Caulobacter crescentus), this protein is Tyrosine--tRNA ligase.